We begin with the raw amino-acid sequence, 535 residues long: Dual specificity calcium/calmodulin-dependent 3',5'-cyclic nucleotide phosphodiesterase 1B (535 aa).

A disordered region spans residues 1 to 21 (MELSPRSPPEMLESDCPSPLE). Ser-7 and Ser-14 each carry phosphoserine. 2 calmodulin-binding regions span residues 26-46 (PSKK…KQLE) and 117-140 (EKPK…MFRR). A PDEase domain is found at 145–502 (VGPTYSTAVH…QKWKERAASG (358 aa)). His-222 functions as the Proton donor in the catalytic mechanism. Zn(2+) contacts are provided by His-226, His-262, Asp-263, and Asp-369. Residue Asp-263 coordinates Mg(2+). 2 disordered regions span residues 445–474 (PLAD…GDPN) and 495–535 (WKER…GNLD). Residues 454-463 (KSQPSFQWRQ) show a composition bias toward polar residues. Residues Ser-465 and Ser-513 each carry the phosphoserine modification.

It belongs to the cyclic nucleotide phosphodiesterase family. PDE1 subfamily. Homodimer. It depends on Zn(2+) as a cofactor. Mg(2+) serves as cofactor.

It localises to the cytoplasm. The protein resides in the cytosol. It carries out the reaction a nucleoside 3',5'-cyclic phosphate + H2O = a nucleoside 5'-phosphate + H(+). It catalyses the reaction 3',5'-cyclic GMP + H2O = GMP + H(+). The catalysed reaction is 3',5'-cyclic AMP + H2O = AMP + H(+). With respect to regulation, type I PDE are activated by the binding of calmodulin in the presence of Ca(2+). Its function is as follows. Cyclic nucleotide phosphodiesterase with a dual specificity for the second messengers cAMP and cGMP, which are key regulators of many important physiological processes. Has a preference for cGMP as a substrate. In Cricetulus griseus (Chinese hamster), this protein is Dual specificity calcium/calmodulin-dependent 3',5'-cyclic nucleotide phosphodiesterase 1B.